Consider the following 429-residue polypeptide: Oxysterol-binding protein-like protein OBPalpha (429 aa).

Belongs to the OSBP family.

This chain is Oxysterol-binding protein-like protein OBPalpha (OBPALPHA), found in Candida albicans (strain SC5314 / ATCC MYA-2876) (Yeast).